A 191-amino-acid chain; its full sequence is Xanthine phosphoribosyltransferase (191 aa).

Leu-20 and Asn-27 together coordinate xanthine. Residue 128–132 (ANGQA) participates in 5-phospho-alpha-D-ribose 1-diphosphate binding. Xanthine is bound at residue Lys-156.

The protein belongs to the purine/pyrimidine phosphoribosyltransferase family. Xpt subfamily. As to quaternary structure, homodimer.

Its subcellular location is the cytoplasm. It catalyses the reaction XMP + diphosphate = xanthine + 5-phospho-alpha-D-ribose 1-diphosphate. Its pathway is purine metabolism; XMP biosynthesis via salvage pathway; XMP from xanthine: step 1/1. Functionally, converts the preformed base xanthine, a product of nucleic acid breakdown, to xanthosine 5'-monophosphate (XMP), so it can be reused for RNA or DNA synthesis. The protein is Xanthine phosphoribosyltransferase of Acinetobacter baylyi (strain ATCC 33305 / BD413 / ADP1).